Reading from the N-terminus, the 335-residue chain is Dihydroorotate dehydrogenase (quinone) (335 aa).

FMN contacts are provided by residues 59–63 and Thr83; that span reads AGADK. Residue Lys63 coordinates substrate. Residue 108–112 participates in substrate binding; that stretch reads NRNGF. Residues Asn136 and Asn169 each contribute to the FMN site. Residue Asn169 coordinates substrate. Ser172 acts as the Nucleophile in catalysis. Asn174 lines the substrate pocket. Residues Lys214 and Gly242 each contribute to the FMN site. A substrate-binding site is contributed by 243 to 244; the sequence is NT. FMN-binding positions include Gly265, Gly294, and 315 to 316; that span reads YS.

This sequence belongs to the dihydroorotate dehydrogenase family. Type 2 subfamily. Monomer. Requires FMN as cofactor.

It is found in the cell membrane. The enzyme catalyses (S)-dihydroorotate + a quinone = orotate + a quinol. Its pathway is pyrimidine metabolism; UMP biosynthesis via de novo pathway; orotate from (S)-dihydroorotate (quinone route): step 1/1. Functionally, catalyzes the conversion of dihydroorotate to orotate with quinone as electron acceptor. This chain is Dihydroorotate dehydrogenase (quinone), found in Glaesserella parasuis serovar 5 (strain SH0165) (Haemophilus parasuis).